A 149-amino-acid chain; its full sequence is Large ribosomal subunit protein bL9 (149 aa).

Belongs to the bacterial ribosomal protein bL9 family.

In terms of biological role, binds to the 23S rRNA. The chain is Large ribosomal subunit protein bL9 from Thermotoga sp. (strain RQ2).